The chain runs to 167 residues: Small ribosomal subunit protein uS5 (167 aa).

Positions 11 to 74 (LQEKLIAVNR…EKARRAMINV (64 aa)) constitute an S5 DRBM domain.

It belongs to the universal ribosomal protein uS5 family. In terms of assembly, part of the 30S ribosomal subunit. Contacts proteins S4 and S8.

In terms of biological role, with S4 and S12 plays an important role in translational accuracy. Its function is as follows. Located at the back of the 30S subunit body where it stabilizes the conformation of the head with respect to the body. The sequence is that of Small ribosomal subunit protein uS5 from Serratia proteamaculans (strain 568).